Here is a 1168-residue protein sequence, read N- to C-terminus: Carboxylic acid reductase (1168 aa).

Residues histidine 290, serine 385, 407 to 408 (EG), threonine 412, aspartate 485, 497 to 500 (YLDR), lysine 506, and lysine 606 contribute to the AMP site. One can recognise a Carrier domain in the interval 645 to 720 (APVLPTLCRA…ALADHIEAAR (76 aa)). Position 679 is an O-(pantetheine 4'-phosphoryl)serine (serine 679). NADP(+) is bound by residues 777 to 780 (TGFL), arginine 804, arginine 814, 844 to 845 (DK), 870 to 872 (PAA), serine 910, tyrosine 946, and lysine 950.

Belongs to the ATP-dependent AMP-binding enzyme family. Carboxylic acid reductase subfamily. Requires pantetheine 4'-phosphate as cofactor.

It carries out the reaction a carboxylate + ATP + NADPH + H(+) = an aldehyde + AMP + diphosphate + NADP(+). It catalyses the reaction a medium-chain fatty acid + ATP + H(+) = a medium-chain fatty acyl-AMP + diphosphate. The enzyme catalyses a long-chain fatty acid + ATP + H(+) = a long-chain fatty acyl-AMP + diphosphate. The catalysed reaction is dodecanoate + ATP + H(+) = dodecanoyl-AMP + diphosphate. It carries out the reaction hexadecanoate + ATP + H(+) = hexadecanoyl-AMP + diphosphate. Functionally, catalyzes the ATP- and NADPH-dependent reduction of carboxylic acids to the corresponding aldehydes. In vitro, also catalyzes the activation of medium/long-chain fatty acids as acyl-adenylates (acyl-AMP). This chain is Carboxylic acid reductase, found in Mycobacterium tuberculosis (strain ATCC 25618 / H37Rv).